The chain runs to 271 residues: MNTPEDSSLGREVAYPSGYDPSLLFPIPRAAGRAAVGLSGALPFVGRDRWHAYELSWLDAHGKPCVATATLHVPCESPALIESKSLKLYLNSLNATRFNSAEAVRARIATDLSTRAGADVSVEFGLPPIDAVGEGESIDALDIAIDDYGPPKADYLATHAGTVVEEVLASALLKSNCPVTGQPDWASVTLRYRGAPIDREGLLRYLVSFRDHADFHEQCVERIFQDLLVRCAPQWLVVEARYTRRGGLDINPVRTSPQMPTPLSIFRDLRQ.

Substrate is bound at residue 81 to 83 (IES). Residue 83-84 (SK) participates in NADPH binding. The active-site Thioimide intermediate is C177. The active-site Proton donor is D184. A substrate-binding site is contributed by 216-217 (HE). 245 to 246 (RG) is an NADPH binding site.

It belongs to the GTP cyclohydrolase I family. QueF type 2 subfamily. As to quaternary structure, homodimer.

The protein localises to the cytoplasm. The enzyme catalyses 7-aminomethyl-7-carbaguanine + 2 NADP(+) = 7-cyano-7-deazaguanine + 2 NADPH + 3 H(+). Its pathway is tRNA modification; tRNA-queuosine biosynthesis. Functionally, catalyzes the NADPH-dependent reduction of 7-cyano-7-deazaguanine (preQ0) to 7-aminomethyl-7-deazaguanine (preQ1). The polypeptide is NADPH-dependent 7-cyano-7-deazaguanine reductase (Xanthomonas campestris pv. campestris (strain B100)).